The following is a 413-amino-acid chain: Methylaspartate ammonia-lyase (413 aa).

Gln172 contacts (2S,3S)-3-methyl-L-aspartate. Asp238, Glu273, and Asp307 together coordinate Mg(2+). A (2S,3S)-3-methyl-L-aspartate-binding site is contributed by Gln329. Lys331 (proton acceptor) is an active-site residue. Residue 360-361 (TC) coordinates (2S,3S)-3-methyl-L-aspartate.

It belongs to the methylaspartate ammonia-lyase family. Homodimer. It depends on Mg(2+) as a cofactor.

It catalyses the reaction (2S,3S)-3-methyl-L-aspartate = mesaconate + NH4(+). The protein operates within amino-acid degradation; L-glutamate degradation via mesaconate pathway; acetate and pyruvate from L-glutamate: step 2/4. Its function is as follows. Involved in the methylaspartate cycle. Catalyzes the formation of the alpha,beta-unsaturated bond by the reversible anti elimination of ammonia from L-threo-beta-methylaspartate (L-threo-(2S,3S)-3-methylaspartate) to give mesaconate. This Citrobacter amalonaticus protein is Methylaspartate ammonia-lyase.